The sequence spans 895 residues: La RNA-binding domain-containing protein LHP1 (895 aa).

Disordered stretches follow at residues 24-265 (ANGN…PPPS), 285-344 (SATS…HDAT), 359-590 (GEDK…LGHG), 796-857 (PDAA…AQDV), and 870-895 (VNGE…NYEQ). Over residues 31–75 (SSPSSSSSATPEPTSLSSSTSGKKAFSTATSKSGQQKQGSSPQPG) the composition is skewed to low complexity. Residues 95–143 (QRTDRSEEKEKRGSSSKNWRERSHRDEKNQDDGEKRNGRERSKKEKGDK) are compositionally biased toward basic and acidic residues. Over residues 152-170 (SATSSEKTAKSLSSSTKNA) the composition is skewed to low complexity. Polar residues-rich tracts occupy residues 172-184 (GVTS…NPIA) and 192-216 (KAQN…STIN). Over residues 228–244 (DNWRARPAKVEKNEKTE) the composition is skewed to basic and acidic residues. Positions 251–260 (QAQPQPQRQL) are enriched in low complexity. A compositionally biased stretch (basic and acidic residues) spans 296–314 (KSDKEKSLTNGMVKEEDSG). Low complexity predominate over residues 325 to 336 (AAAAAAAGTSST). Composition is skewed to basic and acidic residues over residues 359-371 (GEDK…ERLN), 405-428 (HAAE…REGG), 452-468 (EGKK…DGHA), and 485-495 (GDVKETKEGDA). Over residues 496–508 (RSASQQESSSHRS) the composition is skewed to low complexity. Over residues 510-521 (PSISASANTGID) the composition is skewed to polar residues. The segment covering 563–572 (RGSFGGGRAR) has biased composition (gly residues). The 91-residue stretch at 706 to 796 (VPNLDPLRFY…GAESHRWVLP (91 aa)) folds into the HTH La-type RNA-binding domain. At S847 the chain carries Phosphoserine. The span at 873–884 (EIKEKEEVKAME) shows a compositional bias: basic and acidic residues. The span at 885–895 (NEGEESENYEQ) shows a compositional bias: acidic residues.

Functionally, may act as an RNA-binding protein. The polypeptide is La RNA-binding domain-containing protein LHP1 (Cryptococcus neoformans var. grubii serotype A (strain H99 / ATCC 208821 / CBS 10515 / FGSC 9487) (Filobasidiella neoformans var. grubii)).